The sequence spans 418 residues: cAMP-dependent protein kinase type II-beta regulatory subunit (418 aa).

The tract at residues 2–153 is dimerization and phosphorylation; that stretch reads SIEIPAGLTE…RLQEACKDIL (152 aa). A compositionally biased stretch (basic and acidic residues) spans 48–57; sequence TARFGHEGRT. A disordered region spans residues 48-96; it reads TARFGHEGRTWGDLGAAAGGGTPSKGVNFAEEPMQSDSEDGEEEEAAPA. Position 69 is a phosphothreonine (Thr69). Phosphoserine occurs at positions 83, 85, and 114. The segment covering 84–94 has biased composition (acidic residues); that stretch reads DSEDGEEEEAA. 3',5'-cyclic AMP-binding positions include 154–275, Glu223, Arg232, 276–418, Glu352, and Arg361; these read LFKN…ESLP and FLKS…EPTA.

The protein belongs to the cAMP-dependent kinase regulatory chain family. In terms of assembly, the inactive form of the enzyme is composed of two regulatory chains and two catalytic chains. Activation by cAMP produces two active catalytic monomers and a regulatory dimer that binds four cAMP molecules. Interacts with PRKACA and PRKACB. Interacts with the phosphorylated form of PJA2. Forms a complex composed of PRKAR2B, GSK3B and GSKIP through GSKIP interaction; facilitates PKA-induced phosphorylation and regulates GSK3B activity. Post-translationally, phosphorylated by the activated catalytic chain. Four types of regulatory chains are found: I-alpha, I-beta, II-alpha, and II-beta. Their expression varies among tissues and is in some cases constitutive and in others inducible.

Its subcellular location is the cytoplasm. It localises to the cell membrane. Regulatory subunit of the cAMP-dependent protein kinases involved in cAMP signaling in cells. Type II regulatory chains mediate membrane association by binding to anchoring proteins, including the MAP2 kinase. The protein is cAMP-dependent protein kinase type II-beta regulatory subunit (PRKAR2B) of Homo sapiens (Human).